We begin with the raw amino-acid sequence, 299 residues long: Somaliensene A/B synthase (299 aa).

7 helical membrane-spanning segments follow: residues 32-49, 56-72, 110-132, 153-171, 177-194, 222-241, and 247-269; these read WTTL…AVHT, TAVA…LFVY, IAVR…ALLW, LYAG…EIVA, AWRW…LMSV, VFLC…FLMA, and WWIV…RVVL.

The protein belongs to the UbiA prenyltransferase family. Mg(2+) serves as cofactor.

The protein localises to the cell membrane. It carries out the reaction (2E,6E,10E,14E)-geranylfarnesyl diphosphate = somaliensene A + diphosphate. The enzyme catalyses (2E,6E,10E,14E)-geranylfarnesyl diphosphate = (-)-somaliensene B + diphosphate. The protein operates within secondary metabolite biosynthesis; terpenoid biosynthesis. Functionally, sesterterpene cyclase, which converts geranylfarnesyl diphosphate (GFPP) into the terpenes somaliensene A and somaliensene B. The sequence is that of Somaliensene A/B synthase from Streptomyces somaliensis (strain ATCC 33201 / DSM 40738 / JCM 12659 / KCTC 9044 / NCTC 11332 / NRRL B-12077 / IP 733).